The primary structure comprises 244 residues: 14-3-3 protein beta/alpha-A (244 aa).

Position 1 is an N-acetylmethionine (Met1).

It belongs to the 14-3-3 family. As to quaternary structure, homodimer, and heterodimer with other family members.

The protein resides in the cytoplasm. In terms of biological role, adapter protein implicated in the regulation of a large spectrum of both general and specialized signaling pathways. Binds to a large number of partners, usually by recognition of a phosphoserine or phosphothreonine motif. Binding generally results in the modulation of the activity of the binding partner. This chain is 14-3-3 protein beta/alpha-A (ywhab-a), found in Xenopus laevis (African clawed frog).